Here is a 278-residue protein sequence, read N- to C-terminus: Phosphate import ATP-binding protein PstB (278 aa).

Positions 32–273 (YETRDLNLWY…PSDKRTEDYI (242 aa)) constitute an ABC transporter domain. 64–71 (GPSGCGKS) lines the ATP pocket.

This sequence belongs to the ABC transporter superfamily. Phosphate importer (TC 3.A.1.7) family. In terms of assembly, the complex is composed of two ATP-binding proteins (PstB), two transmembrane proteins (PstC and PstA) and a solute-binding protein (PstS).

The protein localises to the cell membrane. It carries out the reaction phosphate(out) + ATP + H2O = ADP + 2 phosphate(in) + H(+). Its function is as follows. Part of the ABC transporter complex PstSACB involved in phosphate import. Responsible for energy coupling to the transport system. The protein is Phosphate import ATP-binding protein PstB of Halalkalibacterium halodurans (strain ATCC BAA-125 / DSM 18197 / FERM 7344 / JCM 9153 / C-125) (Bacillus halodurans).